Here is an 896-residue protein sequence, read N- to C-terminus: Valine--tRNA ligase (896 aa).

The 'HIGH' region motif lies at 43 to 53; that stretch reads PNVTGSLHIGH. The 'KMSKS' region motif lies at 545–549; sequence KMSKS. Lys-548 contacts ATP. Positions 831–857 form a coiled coil; sequence DLDAERARLAKGIAAAEKERDGLAARL.

The protein belongs to the class-I aminoacyl-tRNA synthetase family. ValS type 1 subfamily. In terms of assembly, monomer.

Its subcellular location is the cytoplasm. The catalysed reaction is tRNA(Val) + L-valine + ATP = L-valyl-tRNA(Val) + AMP + diphosphate. Functionally, catalyzes the attachment of valine to tRNA(Val). As ValRS can inadvertently accommodate and process structurally similar amino acids such as threonine, to avoid such errors, it has a 'posttransfer' editing activity that hydrolyzes mischarged Thr-tRNA(Val) in a tRNA-dependent manner. The protein is Valine--tRNA ligase of Rhizorhabdus wittichii (strain DSM 6014 / CCUG 31198 / JCM 15750 / NBRC 105917 / EY 4224 / RW1) (Sphingomonas wittichii).